The primary structure comprises 509 residues: Dihydrolipoyl dehydrogenase, mitochondrial (509 aa).

A mitochondrion-targeting transit peptide spans 1-35; the sequence is MQSWSRVYCSLAKRGHFNRISHGLQGLSAVPLRTY. K66 is subject to N6-acetyllysine; alternate. An N6-succinyllysine; alternate modification is found at K66. Residues 71–80 and K89 each bind FAD; that span reads EKNETLGGTC. An intrachain disulfide couples C80 to C85. An N6-acetyllysine; alternate mark is found at K104, K122, K132, and K143. N6-succinyllysine; alternate is present on residues K104, K122, K132, and K143. An FAD-binding site is contributed by G154. N6-succinyllysine is present on residues K159 and K166. Residue 183-185 coordinates FAD; it reads TGS. Residues 220-227 and E243 contribute to the NAD(+) site; that span reads GAGVIGVE. N6-succinyllysine is present on residues K273 and K277. V278 serves as a coordination point for NAD(+). Residues S285 and S297 each carry the phosphoserine modification. G314 is a binding site for NAD(+). At K346 the chain carries N6-acetyllysine. Residues D355 and 361 to 364 each bind FAD; that span reads MLAH. K410 is modified (N6-acetyllysine; alternate). Position 410 is an N6-succinyllysine; alternate (K410). K417 and K420 each carry N6-acetyllysine. At K430 the chain carries N6-succinyllysine. H487 functions as the Proton acceptor in the catalytic mechanism. Phosphoserine is present on S502. The residue at position 505 (K505) is an N6-acetyllysine; alternate. K505 is subject to N6-succinyllysine; alternate.

It belongs to the class-I pyridine nucleotide-disulfide oxidoreductase family. Homodimer. Part of the multimeric pyruvate dehydrogenase complex that contains multiple copies of pyruvate dehydrogenase (subunits PDHA (PDHA1 or PDHA2) and PDHB, E1), dihydrolipoamide acetyltransferase (DLAT, E2) and lipoamide dehydrogenase (DLD, E3). These subunits are bound to an inner core composed of about 48 DLAT and 12 PDHX molecules (by non covalent bonds). The 2-oxoglutarate dehydrogenase complex is composed of OGDH (2-oxoglutarate dehydrogenase; E1), DLST (dihydrolipoamide succinyltransferase; E2), DLD (dihydrolipoamide dehydrogenase; E3) and the assembly factor KGD4. It contains multiple copies of the three enzymatic components (E1, E2 and E3). In the nucleus, the 2-oxoglutarate dehydrogenase complex associates with KAT2A. Interacts with PDHX. Requires FAD as cofactor. Post-translationally, tyrosine phosphorylated.

The protein resides in the mitochondrion matrix. The protein localises to the nucleus. Its subcellular location is the cell projection. It is found in the cilium. It localises to the flagellum. The protein resides in the cytoplasmic vesicle. The protein localises to the secretory vesicle. Its subcellular location is the acrosome. It catalyses the reaction N(6)-[(R)-dihydrolipoyl]-L-lysyl-[protein] + NAD(+) = N(6)-[(R)-lipoyl]-L-lysyl-[protein] + NADH + H(+). Its function is as follows. Lipoamide dehydrogenase is a component of the glycine cleavage system as well as an E3 component of three alpha-ketoacid dehydrogenase complexes (pyruvate-, alpha-ketoglutarate-, and branched-chain amino acid-dehydrogenase complex). The 2-oxoglutarate dehydrogenase complex is mainly active in the mitochondrion. A fraction of the 2-oxoglutarate dehydrogenase complex also localizes in the nucleus and is required for lysine succinylation of histones: associates with KAT2A on chromatin and provides succinyl-CoA to histone succinyltransferase KAT2A. In monomeric form may have additional moonlighting function as serine protease. Involved in the hyperactivation of spermatazoa during capacitation and in the spermatazoal acrosome reaction. The sequence is that of Dihydrolipoyl dehydrogenase, mitochondrial (DLD) from Macaca fascicularis (Crab-eating macaque).